A 571-amino-acid chain; its full sequence is DM7 family protein CG15332 (571 aa).

The segment at 440–472 (TRDDGINTADYQSQFPELEPEPEPEPEDEGEDV) is disordered. Acidic residues predominate over residues 457-471 (LEPEPEPEPEDEGED).

Belongs to the DM7 family.

This Drosophila melanogaster (Fruit fly) protein is DM7 family protein CG15332.